We begin with the raw amino-acid sequence, 118 residues long: MNDLLFAAGNLHIGLGHDYLKCIALLINVKRFFSLTESYGNISDKLAVVAMKGVQFDQFEEAYKAYKETVAINQNSLVDFLSALITLIKAGEKLQKAGESLAIIMNKLLEMSPENSMK.

This is an uncharacterized protein from Bacillus subtilis (strain 168).